Here is a 228-residue protein sequence, read N- to C-terminus: Ribose-5-phosphate isomerase A (228 aa).

Residues 26–29 (SGST), 81–84 (DGAD), and 94–97 (KGGG) contribute to the substrate site. The Proton acceptor role is filled by E103. K121 lines the substrate pocket.

The protein belongs to the ribose 5-phosphate isomerase family. As to quaternary structure, homodimer.

It catalyses the reaction aldehydo-D-ribose 5-phosphate = D-ribulose 5-phosphate. Its pathway is carbohydrate degradation; pentose phosphate pathway; D-ribose 5-phosphate from D-ribulose 5-phosphate (non-oxidative stage): step 1/1. Functionally, catalyzes the reversible conversion of ribose-5-phosphate to ribulose 5-phosphate. This is Ribose-5-phosphate isomerase A from Shouchella clausii (strain KSM-K16) (Alkalihalobacillus clausii).